A 428-amino-acid chain; its full sequence is C4-dicarboxylate transport protein (428 aa).

9 helical membrane-spanning segments follow: residues 8–28, 44–64, 76–96, 142–162, 184–204, 222–242, 289–309, 326–346, and 352–372; these read SLYV…HFYP, LIKM…IAGM, VALL…LIIV, IGAF…LFGF, VIFG…FGAM, LIIC…GSIA, VVGL…SIYL, IFHQ…AAGV, and IVLA…LALI.

Belongs to the dicarboxylate/amino acid:cation symporter (DAACS) (TC 2.A.23) family.

It localises to the cell inner membrane. Functionally, responsible for the transport of dicarboxylates such as succinate, fumarate, and malate from the periplasm across the membrane. The chain is C4-dicarboxylate transport protein from Klebsiella pneumoniae subsp. pneumoniae (strain ATCC 700721 / MGH 78578).